The primary structure comprises 319 residues: MATTKPYRVLLYYMYTTIENPEEFAAEHLAFCNSLELKGRILVAKEGINGTCSGTVEQTEKYMEAMNNDPRFDGIVFKIDEADGHAFKKMHVRPRPELVTLRLEDDINPHEITGKYLEPKDFYEAMKQEDTVIIDARNDYEFDLGHFKGAIKPDIESFRELPDWIRENKEILEGKKILTYCTGGIRCEKFSGWLVREGYEDVSQLHGGIVTYGKDPEVQGELWDGQCYVFDERIAVPVNQKEHVIVGKDHFTGEPCERYVNCSNPECNKKILCSEENEAKYLRACSHECRVSPRNRYVIQHELTEEQVAAALEKIEAEK.

Residues 127 to 221 (KQEDTVIIDA…YGKDPEVQGE (95 aa)) form the Rhodanese domain. Residue C181 is the Cysteine persulfide intermediate of the active site.

It belongs to the TrhO family.

The catalysed reaction is uridine(34) in tRNA + AH2 + O2 = 5-hydroxyuridine(34) in tRNA + A + H2O. Its function is as follows. Catalyzes oxygen-dependent 5-hydroxyuridine (ho5U) modification at position 34 in tRNAs. The protein is tRNA uridine(34) hydroxylase of Bacillus cereus (strain Q1).